The following is a 751-amino-acid chain: Collagen alpha-1(XIII) chain (751 aa).

Residues methionine 1–glycine 24 are disordered. Topologically, residues methionine 1–proline 40 are cytoplasmic. The segment at methionine 1 to proline 119 is nonhelical region 1 (NC1). The segment covering arginine 15–glycine 24 has biased composition (gly residues). Residues glycine 41 to alanine 59 form a helical; Signal-anchor for type II membrane protein membrane-spanning segment. The Extracellular portion of the chain corresponds to histidine 60–lysine 751. 3 disordered regions span residues alanine 108 to arginine 127, proline 190 to histidine 225, and threonine 265 to aspartate 449. A compositionally biased stretch (pro residues) spans asparagine 116–threonine 125. The interval glycine 120–tyrosine 223 is triple-helical region 1 (COL1). Residues proline 204–glutamine 213 are compositionally biased toward low complexity. Residues lysine 214–histidine 225 show a composition bias toward basic and acidic residues. A nonhelical region 2 (NC2) region spans residues proline 224–threonine 273. The triple-helical region 2 (COL2) stretch occupies residues glycine 274–glycine 445. Composition is skewed to pro residues over residues proline 278–serine 288, leucine 296–lysine 312, and proline 391–proline 402. Positions lysine 403 to lysine 436 are enriched in low complexity. A compositionally biased stretch (basic and acidic residues) spans alanine 438–methionine 447. The interval glutamate 446–methionine 467 is nonhelical region 3 (NC3). The N-linked (GlcNAc...) asparagine glycan is linked to asparagine 451. The disordered stretch occupies residues leucine 466–lysine 751. Residues glycine 468–aspartate 733 are triple-helical region 3 (COL3). The span at proline 470–threonine 484 shows a compositional bias: pro residues. 3 stretches are compositionally biased toward basic and acidic residues: residues histidine 499–proline 509, threonine 557–arginine 568, and glutamate 586–proline 596. A compositionally biased stretch (pro residues) spans proline 601–proline 613. Over residues leucine 615–glutamate 628 the composition is skewed to low complexity. Residues serine 630–arginine 643 show a composition bias toward basic and acidic residues. Residues proline 658–alanine 673 are compositionally biased toward pro residues. Residues aspartate 684–leucine 699 show a composition bias toward low complexity. Residues lysine 706–aspartate 726 show a composition bias toward basic and acidic residues. Residues alanine 734–lysine 751 form a nonhelical region 4 (NC4) region.

As to quaternary structure, homotrimer; disulfide-linked. Nucleation of the type XIII collagen triple helix is likely to occur at the N-terminal region with triple helix formation proceeding from the N- to the C-terminus. Interacts with FN1, perlecan/HSPG2 and NID2.

The protein resides in the cell membrane. Its subcellular location is the postsynaptic cell membrane. In terms of biological role, involved in cell-matrix and cell-cell adhesion interactions that are required for normal development. May participate in the linkage between muscle fiber and basement membrane. May play a role in endochondral ossification of bone and branching morphogenesis of lung. Binds heparin. At neuromuscular junctions, may play a role in acetylcholine receptor clustering. The sequence is that of Collagen alpha-1(XIII) chain from Mus musculus (Mouse).